The primary structure comprises 426 residues: Mothers against decapentaplegic homolog 7 (426 aa).

Positions 14–40 are disordered; the sequence is WRSRAPGGEDEEEGVGGGGGGGGLRGE. Residues 28–39 show a composition bias toward gly residues; sequence VGGGGGGGGLRG. N6-acetyllysine; alternate is present on residues lysine 64 and lysine 70. Glycyl lysine isopeptide (Lys-Gly) (interchain with G-Cter in ubiquitin); alternate cross-links involve residues lysine 64 and lysine 70. The region spanning 64-207 is the MH1 domain; the sequence is KAVRGAKGHH…LSRLCELESP (144 aa). A compositionally biased stretch (basic residues) spans 67 to 76; that stretch reads RGAKGHHHPH. The disordered stretch occupies residues 67–88; it reads RGAKGHHHPHPPSSGAGAAGGA. Zn(2+) is bound by residues cysteine 125, cysteine 180, cysteine 192, and histidine 197. The short motif at 208–211 is the PY-motif element; it reads PPPY. The important for interaction with SMURF2 stretch occupies residues 208–217; it reads PPPYSRYPMD. Position 249 is a phosphoserine (serine 249). Residues 261-426 form the MH2 domain; sequence WCVVAYWEEK…CWLEVIFNSR (166 aa).

It belongs to the dwarfin/SMAD family. As to quaternary structure, interacts with COPS5. Interacts with STAMBP. Interacts with NEDD4L. Interacts with RNF111, AXIN1 and AXIN2. Interacts with PPP1R15A. Interacts with ACVR1B, SMURF1, SMURF2 and TGFBR1; SMAD7 recruits SMURF1 and SMURF2 to the TGF-beta receptor and regulates its degradation. Interacts with WWP1. Interacts with PDPK1 (via PH domain). Interacts with TSC22D1/TSC-22; the interaction requires TGF-beta and the interaction is inhibited by TGFBR1. Post-translationally, phosphorylation on Ser-249 does not affect its stability, nuclear localization or inhibitory function in TGFB signaling; however it affects its ability to regulate transcription. Phosphorylated by PDPK1. In terms of processing, ubiquitinated by WWP1. Polyubiquitinated by RNF111, which is enhanced by AXIN1 and promotes proteasomal degradation. In response to TGF-beta, ubiquitinated by SMURF1; which promotes its degradation. Acetylation prevents ubiquitination and degradation mediated by SMURF1. In terms of tissue distribution, ubiquitous.

It is found in the nucleus. Its subcellular location is the cytoplasm. Functionally, antagonist of signaling by TGF-beta (transforming growth factor) type 1 receptor superfamily members; has been shown to inhibit TGF-beta (Transforming growth factor) and activin signaling by associating with their receptors thus preventing SMAD2 access. Functions as an adapter to recruit SMURF2 to the TGF-beta receptor complex. Also acts by recruiting the PPP1R15A-PP1 complex to TGFBR1, which promotes its dephosphorylation. Positively regulates PDPK1 kinase activity by stimulating its dissociation from the 14-3-3 protein YWHAQ which acts as a negative regulator. The chain is Mothers against decapentaplegic homolog 7 (Smad7) from Rattus norvegicus (Rat).